The sequence spans 598 residues: MTLPVSDPAAWATAMNNLGMAPLGIAGQPILPDFDPALGMMTGIPPITPMMPGLGIVPPPIPPDMPVAKEIIHCKSCTLFPPNPNLPPPATRERPPGCKTVFVGGLPENGTEQIIVEVFEQCGEIIAIRKSKKNFCHIRFAEEYMVDKALYLSGYRIRLGSSTDKKDTGRLHVDFAQARDDLYEWECKQRMLAREERHRRRMEEERMRPPSPPPVVHYSDHECSIVAEKLKDDSKFSEAVQTLLTWIERGEVNRRSANHFYSMIQSANSHVRRLVNEKATHEKEMEEAKEKFKQALSGILIQFEQIVAVYHSASKQKAWDHFTKAQRKNISVWCKQAEEIRNIHNDELMGIRREEEMEMSDDEIEETTETKETEESALVSQAEALKEENDSLRWQLDAYRNEVELLKQEQGKAHREDDPNKEQQLKLLQQALQGMQQHLLKVQEEYKKKEAELDRIKDDNLQVEQLLENFHEKQENCGSRLCASSQEGEQPLEKTAVSNPVKSEREALLVGIISTFLHVHPFGASIEYICSYLNRLDNKASYQIPSKLTTSPLLPISTSDVESLMSRLQHTFRQEMTGVGASLEKRWKFCGFEGLKLT.

The RRM domain maps to lysine 99–alanine 178. 2 coiled-coil regions span residues isoleucine 264 to isoleucine 299 and arginine 352 to asparagine 476.

It belongs to the ENOX family. Requires Cu cation as cofactor. In terms of processing, glycosylated.

It localises to the cell membrane. It is found in the secreted. The protein localises to the extracellular space. Inhibited by the antitumor sulfonylurea LY181984, the vabilloid capsaicin, and retinoids. In terms of biological role, may be involved in cell growth. Probably acts as a terminal oxidase of plasma electron transport from cytosolic NAD(P)H via hydroquinones to acceptors at the cell surface. Hydroquinone oxidase activity alternates with a protein disulfide-thiol interchange/oxidoreductase activity which may control physical membrane displacements associated with vesicle budding or cell enlargement. The activities oscillate with a period length of 22 minutes and play a role in control of the ultradian cellular biological clock. In Mus musculus (Mouse), this protein is Ecto-NOX disulfide-thiol exchanger 2 (Enox2).